Consider the following 361-residue polypeptide: Beta-hexosaminidase (361 aa).

Substrate is bound by residues Asp-69, Arg-77, Arg-144, and 174-175; that span reads KH. The active-site Proton donor/acceptor is the His-187. Asp-258 acts as the Nucleophile in catalysis.

The protein belongs to the glycosyl hydrolase 3 family. NagZ subfamily.

The protein resides in the cytoplasm. It catalyses the reaction Hydrolysis of terminal non-reducing N-acetyl-D-hexosamine residues in N-acetyl-beta-D-hexosaminides.. Its pathway is cell wall biogenesis; peptidoglycan recycling. Its function is as follows. Plays a role in peptidoglycan recycling by cleaving the terminal beta-1,4-linked N-acetylglucosamine (GlcNAc) from peptide-linked peptidoglycan fragments, giving rise to free GlcNAc, anhydro-N-acetylmuramic acid and anhydro-N-acetylmuramic acid-linked peptides. This is Beta-hexosaminidase from Neisseria gonorrhoeae (strain ATCC 700825 / FA 1090).